We begin with the raw amino-acid sequence, 247 residues long: Adenosylcobinamide-GDP ribazoletransferase (247 aa).

The next 5 helical transmembrane spans lie at 34-54 (IITF…VFMV), 59-79 (CGVP…TGGF), 113-133 (GGLA…ELAL), 138-158 (ILAS…LLMY), and 194-214 (VLLP…AIFI).

This sequence belongs to the CobS family. Mg(2+) serves as cofactor.

The protein resides in the cell inner membrane. The catalysed reaction is alpha-ribazole + adenosylcob(III)inamide-GDP = adenosylcob(III)alamin + GMP + H(+). It catalyses the reaction alpha-ribazole 5'-phosphate + adenosylcob(III)inamide-GDP = adenosylcob(III)alamin 5'-phosphate + GMP + H(+). It functions in the pathway cofactor biosynthesis; adenosylcobalamin biosynthesis; adenosylcobalamin from cob(II)yrinate a,c-diamide: step 7/7. Joins adenosylcobinamide-GDP and alpha-ribazole to generate adenosylcobalamin (Ado-cobalamin). Also synthesizes adenosylcobalamin 5'-phosphate from adenosylcobinamide-GDP and alpha-ribazole 5'-phosphate. The polypeptide is Adenosylcobinamide-GDP ribazoletransferase (Shigella dysenteriae serotype 1 (strain Sd197)).